Reading from the N-terminus, the 411-residue chain is 2,3-bisphosphoglycerate-independent phosphoglycerate mutase (411 aa).

This sequence belongs to the BPG-independent phosphoglycerate mutase family. A-PGAM subfamily.

It catalyses the reaction (2R)-2-phosphoglycerate = (2R)-3-phosphoglycerate. Its pathway is carbohydrate degradation; glycolysis; pyruvate from D-glyceraldehyde 3-phosphate: step 3/5. Its function is as follows. Catalyzes the interconversion of 2-phosphoglycerate and 3-phosphoglycerate. In Pyrobaculum islandicum (strain DSM 4184 / JCM 9189 / GEO3), this protein is 2,3-bisphosphoglycerate-independent phosphoglycerate mutase.